The following is a 455-amino-acid chain: D-arabinitol 4-dehydrogenase (455 aa).

It belongs to the mannitol dehydrogenase family. Monomer.

It catalyses the reaction D-arabinitol + NAD(+) = D-xylulose + NADH + H(+). The protein operates within carbohydrate metabolism; D-arabinitol metabolism. The sequence is that of D-arabinitol 4-dehydrogenase (dalD) from Klebsiella pneumoniae.